The primary structure comprises 166 residues: Cytochrome c-550 2 (166 aa).

The signal sequence occupies residues 1 to 32; that stretch reads MFSRQFGRLATLALALAVAGCAGGEQSTTAEA. Heme c is bound by residues Cys71, Cys74, and His75.

The protein belongs to the cytochrome c family. PsbV subfamily. It depends on heme c as a cofactor.

The protein resides in the cell inner membrane. In terms of biological role, probable low-potential cytochrome c, might function in photosystem II (PSII). The protein is Cytochrome c-550 2 (psbV2) of Gloeobacter violaceus (strain ATCC 29082 / PCC 7421).